The primary structure comprises 1159 residues: Nucleoporin nup124 (1159 aa).

Over residues 1–13 (MPPVSKNTRTSSK) the composition is skewed to polar residues. Disordered regions lie at residues 1 to 28 (MPPV…SSRP), 44 to 77 (FTSG…ELTP), 106 to 125 (HTNT…TNSP), and 183 to 273 (TLNI…RRRR). 2 stretches are compositionally biased toward basic and acidic residues: residues 48–62 (LDEK…DRKS) and 106–119 (HTNT…KQKQ). Position 211 is a phosphoserine (serine 211). Residues 226-239 (NEPSAKQNKSFSGN) are compositionally biased toward polar residues. The span at 240-260 (DSHKSLTDIRDKENGETEVSA) shows a compositional bias: basic and acidic residues. Positions 263 to 273 (HVPHRSSRRRR) are enriched in basic residues. At serine 380 the chain carries Phosphoserine. Over residues 426-441 (DNKTFEHQPLSKDTEA) the composition is skewed to basic and acidic residues. Disordered stretches follow at residues 426–715 (DNKT…NTEN), 746–780 (EEAV…AVPS), and 794–1159 (EKTN…RRKR). A compositionally biased stretch (polar residues) spans 442 to 453 (PKSQFSSSPTKE). At serine 465 the chain carries Phosphoserine. The span at 480 to 494 (FKFEPKTEATTDKKL) shows a compositional bias: basic and acidic residues. Positions 528 to 549 (PSKTQETPSITENKPSFFSQLS) are enriched in polar residues. Phosphoserine is present on serine 546. The segment covering 550–560 (PKREETEKKDN) has biased composition (basic and acidic residues). The segment covering 590-626 (PTFNFSLNNASSTQDTTKPTLQFNFGSSFGKPTSNIF) has biased composition (polar residues). Over residues 642 to 656 (ASESKPSAPESKPSS) the composition is skewed to low complexity. 2 stretches are compositionally biased toward polar residues: residues 657-672 (GFGN…FNLT) and 696-715 (DSLS…NTEN). A compositionally biased stretch (basic and acidic residues) spans 746–758 (EEAVKQKETEKEV). 2 stretches are compositionally biased toward polar residues: residues 771–780 (SVSSNNAVPS) and 798–814 (ENNI…NATK). Over residues 815-824 (RTLEQTEDAK) the composition is skewed to basic and acidic residues. Residues 830–861 (FGSTTEQANKKASTSNETTKPQLDTSSKTDGV) are compositionally biased toward polar residues. The segment covering 863–879 (ANAPFSFASAFNAPKPS) has biased composition (low complexity). Residues 880–908 (TNTADGKDSASNLTTPSPAFSFGNNSGVK) show a composition bias toward polar residues. Positions 909-926 (ASSNNNPSTNSSTAPFSF) are enriched in low complexity. Residues 927–947 (GTSNKPAFSFGSATSKTTSEG) are compositionally biased toward polar residues. Residues 948-963 (TAPAASASAPAPTTSA) show a composition bias toward low complexity. Composition is skewed to polar residues over residues 1001-1019 (GANN…TPAP), 1042-1064 (ITNT…NAGS), 1074-1087 (NTPN…NASQ), 1095-1108 (EPSN…STGF), and 1116-1144 (SAFN…QTNA).

It to yeast nucleoporins NUP1 and NUP2.

Its subcellular location is the nucleus. The protein resides in the nuclear pore complex. Functionally, nucleoporins may be involved in both binding and translocation of the proteins during nucleocytoplasmic transport. In S.pombe it is required for the nuclear localization of retrotransposon tf1. The protein is Nucleoporin nup124 (nup124) of Schizosaccharomyces pombe (strain 972 / ATCC 24843) (Fission yeast).